A 608-amino-acid chain; its full sequence is UvrABC system protein C (608 aa).

One can recognise a GIY-YIG domain in the interval 16–94; the sequence is NRPGVYRMFD…IKEWRPPYNI (79 aa). In terms of domain architecture, UVR spans 204 to 239; it reads NALADELNTGMEQAAMRLDFEKAAELRDQVAILRRV.

It belongs to the UvrC family. In terms of assembly, interacts with UvrB in an incision complex.

The protein resides in the cytoplasm. In terms of biological role, the UvrABC repair system catalyzes the recognition and processing of DNA lesions. UvrC both incises the 5' and 3' sides of the lesion. The N-terminal half is responsible for the 3' incision and the C-terminal half is responsible for the 5' incision. The chain is UvrABC system protein C from Pseudomonas paraeruginosa (strain DSM 24068 / PA7) (Pseudomonas aeruginosa (strain PA7)).